We begin with the raw amino-acid sequence, 417 residues long: Histidinol-phosphate aminotransferase 1, chloroplastic (417 aa).

The N-terminal 40 residues, 1 to 40, are a transit peptide targeting the chloroplast; sequence MGVINVQGSPSFSIHSSESNLRKSRALKKPFCSIRNRVYC. Ala41 bears the N-acetylalanine mark. Lys277 carries the post-translational modification N6-(pyridoxal phosphate)lysine.

It belongs to the class-II pyridoxal-phosphate-dependent aminotransferase family. Histidinol-phosphate aminotransferase subfamily. In terms of assembly, homodimer. The cofactor is pyridoxal 5'-phosphate. In terms of tissue distribution, expressed in both vegetative and reproductive tissues.

It localises to the plastid. The protein resides in the chloroplast. The enzyme catalyses L-histidinol phosphate + 2-oxoglutarate = 3-(imidazol-4-yl)-2-oxopropyl phosphate + L-glutamate. The protein operates within amino-acid biosynthesis; L-histidine biosynthesis; L-histidine from 5-phospho-alpha-D-ribose 1-diphosphate: step 7/9. This is Histidinol-phosphate aminotransferase 1, chloroplastic (HISN6A) from Arabidopsis thaliana (Mouse-ear cress).